Here is a 182-residue protein sequence, read N- to C-terminus: Transcription termination/antitermination protein NusG (182 aa).

A KOW domain is found at 130 to 161; that stretch reads VGEVVRVNEGPFADFNGTVEEVDYEKSRLKVS.

The protein belongs to the NusG family.

Participates in transcription elongation, termination and antitermination. The chain is Transcription termination/antitermination protein NusG from Vibrio vulnificus (strain CMCP6).